The following is a 682-amino-acid chain: Methionine--tRNA ligase (682 aa).

The 'HIGH' region motif lies at 15-25; sequence PYANGAIHLGH. Zn(2+) contacts are provided by cysteine 146, cysteine 149, cysteine 159, and cysteine 162. The 'KMSKS' region signature appears at 331-335; the sequence is KMSKS. An ATP-binding site is contributed by lysine 334. In terms of domain architecture, tRNA-binding spans 580–682; that stretch reads DFAKLDMRVA…SGVTAGMQVK (103 aa).

Belongs to the class-I aminoacyl-tRNA synthetase family. MetG type 1 subfamily. As to quaternary structure, homodimer. It depends on Zn(2+) as a cofactor.

It localises to the cytoplasm. It carries out the reaction tRNA(Met) + L-methionine + ATP = L-methionyl-tRNA(Met) + AMP + diphosphate. Is required not only for elongation of protein synthesis but also for the initiation of all mRNA translation through initiator tRNA(fMet) aminoacylation. The sequence is that of Methionine--tRNA ligase from Haemophilus influenzae (strain PittEE).